We begin with the raw amino-acid sequence, 302 residues long: Probable histone acetyltransferase Rv0428c (302 aa).

The catalysed reaction is L-lysyl-[histone] + acetyl-CoA = N(6)-acetyl-L-lysyl-[histone] + CoA + H(+). In terms of biological role, shows histone acetyl transferase (HAT) activity with recombinant eukaryotic H3 histone expressed in bacteria as substrate and acetyl-CoA as donor. May be involved in survival under stress conditions. The polypeptide is Probable histone acetyltransferase Rv0428c (Mycobacterium tuberculosis (strain ATCC 25618 / H37Rv)).